A 297-amino-acid polypeptide reads, in one-letter code: Homoserine kinase (297 aa).

An ATP-binding site is contributed by proline 82–serine 92.

Belongs to the GHMP kinase family. Homoserine kinase subfamily.

It localises to the cytoplasm. The catalysed reaction is L-homoserine + ATP = O-phospho-L-homoserine + ADP + H(+). Its pathway is amino-acid biosynthesis; L-threonine biosynthesis; L-threonine from L-aspartate: step 4/5. Catalyzes the ATP-dependent phosphorylation of L-homoserine to L-homoserine phosphate. This is Homoserine kinase from Bacillus cereus (strain AH187).